Reading from the N-terminus, the 364-residue chain is RNA polymerase II holoenzyme cyclin-like subunit (364 aa).

A Cyclin N-terminal domain is found at 53–143 (QQINRLSKRI…VGECEFSLIS (91 aa)). The tract at residues 268–303 (PGFGSQGSQQQAGFSQGNSQGSLQGDSAAAEPKKVT) is disordered. A compositionally biased stretch (low complexity) spans 273 to 289 (QGSQQQAGFSQGNSQGS).

It belongs to the cyclin family. Cyclin C subfamily. In terms of assembly, component of the SRB8-11 complex, a regulatory module of the Mediator complex.

It is found in the nucleus. Its function is as follows. Component of the SRB8-11 complex. The SRB8-11 complex is a regulatory module of the Mediator complex which is itself involved in regulation of basal and activated RNA polymerase II-dependent transcription. The SRB8-11 complex may be involved in the transcriptional repression of a subset of genes regulated by Mediator. It may inhibit the association of the Mediator complex with RNA polymerase II to form the holoenzyme complex. The SRB8-11 complex phosphorylates the C-terminal domain (CTD) of the largest subunit of RNA polymerase II. The protein is RNA polymerase II holoenzyme cyclin-like subunit (SSN8) of Chaetomium globosum (strain ATCC 6205 / CBS 148.51 / DSM 1962 / NBRC 6347 / NRRL 1970) (Soil fungus).